The following is an 83-amino-acid chain: Lipolysis-activating peptide 1-alpha chain (83 aa).

The N-terminal stretch at 1–21 (MNIILFYFMPILISLPGLLAS) is a signal peptide. Positions 22–83 (GTYPNDVYGL…LFWDVYKEHC (62 aa)) constitute an LCN-type CS-alpha/beta domain. Cystine bridges form between cysteine 35–cysteine 58, cysteine 44–cysteine 63, and cysteine 48–cysteine 65.

This sequence belongs to the long (3 C-C) scorpion toxin superfamily. Monomer (edited version) and heterodimer (non-edited version) of this alpha chain and a beta chain (AC P0CI43). In terms of tissue distribution, expressed by the venom gland.

It localises to the secreted. Functionally, the heterodimer non-edited LVP1 induces lipolysis in rat adipocytes. Induction of lipolysis by LVP1 appears to be mediated through the beta-2 adrenergic receptor pathway (ADRB2). In terms of biological role, the edited BmKBTx-like, similar to beta-toxins, may modulate voltage-gated sodium channels (Nav) and may block voltage-gated potassium channels (Kv). This Lychas mucronatus (Chinese swimming scorpion) protein is Lipolysis-activating peptide 1-alpha chain.